A 94-amino-acid chain; its full sequence is Nucleoid-associated protein MYPE8070 (94 aa).

The protein belongs to the YbaB/EbfC family. As to quaternary structure, homodimer.

The protein resides in the cytoplasm. It is found in the nucleoid. Binds to DNA and alters its conformation. May be involved in regulation of gene expression, nucleoid organization and DNA protection. In Malacoplasma penetrans (strain HF-2) (Mycoplasma penetrans), this protein is Nucleoid-associated protein MYPE8070.